A 197-amino-acid chain; its full sequence is Ribonuclease HII (197 aa).

Positions 11-197 (HLIAGVDEVG…FAPVKKILGL (187 aa)) constitute an RNase H type-2 domain. D17, E18, and D109 together coordinate a divalent metal cation.

The protein belongs to the RNase HII family. Requires Mn(2+) as cofactor. It depends on Mg(2+) as a cofactor.

It localises to the cytoplasm. The catalysed reaction is Endonucleolytic cleavage to 5'-phosphomonoester.. Its function is as follows. Endonuclease that specifically degrades the RNA of RNA-DNA hybrids. The sequence is that of Ribonuclease HII from Actinobacillus pleuropneumoniae serotype 7 (strain AP76).